Consider the following 330-residue polypeptide: Probable cytosolic iron-sulfur protein assembly protein 1 (330 aa).

WD repeat units follow at residues 12-49, 56-95, 105-144, 151-190, 195-236, 248-286, and 292-330; these read LYKEKIWSFDFSQGILATGSTDRKIKLVSVKDDDFTLI, AHKKAIRSVAWRPHTSLLAAGSFDSTVSIWAKEESADRTF, GHENEVKGVAWSNDGYYLATCSRDKSVWIWETDESGEEYE, EHSQDVKHVIWHPSEALLASSSYDDTVRIWKDYDDDWECV, GHEG…EDDQ, VHKRQVYNVAWGFNGLIASVGADGVLAVYEEVDGEWKVF, and CHGVYEINVVKWLELNGKTILATGGDDGIVNFWSLEKAA.

The protein belongs to the WD repeat CIA1 family. As to quaternary structure, interacts with NAR1.

Its subcellular location is the cytoplasm. The protein localises to the nucleus. Its function is as follows. Essential component of the cytosolic iron-sulfur (Fe/S) protein assembly machinery. Required for the maturation of extramitochondrial Fe/S proteins. This chain is Probable cytosolic iron-sulfur protein assembly protein 1, found in Saccharomyces cerevisiae (strain YJM789) (Baker's yeast).